The sequence spans 269 residues: ATP synthase subunit delta (269 aa).

The protein belongs to the ATPase delta chain family. As to quaternary structure, F-type ATPases have 2 components, F(1) - the catalytic core - and F(0) - the membrane proton channel. F(1) has five subunits: alpha(3), beta(3), gamma(1), delta(1), epsilon(1). F(0) has three main subunits: a(1), b(2) and c(10-14). The alpha and beta chains form an alternating ring which encloses part of the gamma chain. F(1) is attached to F(0) by a central stalk formed by the gamma and epsilon chains, while a peripheral stalk is formed by the delta and b chains.

Its subcellular location is the cell membrane. F(1)F(0) ATP synthase produces ATP from ADP in the presence of a proton or sodium gradient. F-type ATPases consist of two structural domains, F(1) containing the extramembraneous catalytic core and F(0) containing the membrane proton channel, linked together by a central stalk and a peripheral stalk. During catalysis, ATP synthesis in the catalytic domain of F(1) is coupled via a rotary mechanism of the central stalk subunits to proton translocation. Its function is as follows. This protein is part of the stalk that links CF(0) to CF(1). It either transmits conformational changes from CF(0) to CF(1) or is implicated in proton conduction. In Thermobifida fusca (strain YX), this protein is ATP synthase subunit delta.